Here is a 592-residue protein sequence, read N- to C-terminus: Aspartate--tRNA(Asp/Asn) ligase (592 aa).

Glu-177 is a binding site for L-aspartate. The segment at 201-204 is aspartate; that stretch reads QLFK. Arg-223 serves as a coordination point for L-aspartate. ATP-binding positions include 223–225 and Gln-232; that span reads RDE. His-451 lines the L-aspartate pocket. Glu-485 is an ATP binding site. Arg-492 is a binding site for L-aspartate. Position 537 to 540 (537 to 540) interacts with ATP; it reads GLDR.

Belongs to the class-II aminoacyl-tRNA synthetase family. Type 1 subfamily. As to quaternary structure, homodimer.

It is found in the cytoplasm. The catalysed reaction is tRNA(Asx) + L-aspartate + ATP = L-aspartyl-tRNA(Asx) + AMP + diphosphate. Aspartyl-tRNA synthetase with relaxed tRNA specificity since it is able to aspartylate not only its cognate tRNA(Asp) but also tRNA(Asn). Reaction proceeds in two steps: L-aspartate is first activated by ATP to form Asp-AMP and then transferred to the acceptor end of tRNA(Asp/Asn). The chain is Aspartate--tRNA(Asp/Asn) ligase from Bacillus subtilis (strain 168).